Consider the following 476-residue polypeptide: Ubiquitin-conjugating enzyme E2 variant 3 (476 aa).

A UEV domain is found at 2–145 (EFSAETLRQQ…EEELPLYSLS (144 aa)). Residue 185 to 213 (GDMALACLLAVSAKGTAGKLLLLDPTDGE) coordinates NAD(+).

This sequence in the N-terminal section; belongs to the ubiquitin-conjugating enzyme family. UEV subfamily. The protein in the C-terminal section; belongs to the LDH/MDH superfamily. As to quaternary structure, homodimer.

Possible negative regulator of polyubiquitination. This chain is Ubiquitin-conjugating enzyme E2 variant 3 (uevld), found in Xenopus tropicalis (Western clawed frog).